The chain runs to 130 residues: Small ribosomal subunit protein uS9 (130 aa).

It belongs to the universal ribosomal protein uS9 family.

This chain is Small ribosomal subunit protein uS9, found in Alkalilimnicola ehrlichii (strain ATCC BAA-1101 / DSM 17681 / MLHE-1).